The primary structure comprises 336 residues: DNA repair protein RAD51 homolog A (336 aa).

A HhH domain is found at 45–74 (TVEAVAYAPKKELLNIKGISEAKAEKILAE). An ATP-binding site is contributed by 124-131 (GEFRTGKT). The Nuclear export signal signature appears at 242 to 257 (LARFLRMLLRLADEFG).

It belongs to the RecA family. RAD51 subfamily. In terms of assembly, forms linear homooligomers, giving rise to a RAD51 nucleoprotein filament, which is essential for strand-pairing reactions during DNA recombination.

The protein resides in the nucleus. The protein localises to the cytoplasm. Its subcellular location is the chromosome. Its function is as follows. Plays an important role in homologous strand exchange, a key step in DNA repair through homologous recombination (HR). Binds to single-stranded DNA in an ATP-dependent manner to form nucleoprotein filaments which are essential for the homology search and strand exchange. Catalyzes the recognition of homology and strand exchange between homologous DNA partners to form a joint molecule between a processed DNA break and the repair template. Recruited to resolve stalled replication forks during replication stress. Also involved in interstrand cross-link repair. This is DNA repair protein RAD51 homolog A (rad51-a) from Xenopus laevis (African clawed frog).